The following is a 606-amino-acid chain: Mitogen-activated protein kinase kinase kinase 7 (606 aa).

Residues methionine 1–tyrosine 300 are interaction with MAPK8IP1. The 256-residue stretch at isoleucine 36–phenylalanine 291 folds into the Protein kinase domain. ATP is bound by residues valine 42–valine 50 and lysine 63. Lysine 72 participates in a covalent cross-link: Glycyl lysine isopeptide (Lys-Gly) (interchain with G-Cter in ubiquitin). Aspartate 156 (proton acceptor) is an active-site residue. Residue lysine 158 forms a Glycyl lysine isopeptide (Lys-Gly) (interchain with G-Cter in ubiquitin) linkage. 2 positions are modified to phosphothreonine; by autocatalysis: threonine 184 and threonine 187. Residue serine 192 is modified to Phosphoserine; by autocatalysis. Residue lysine 209 forms a Glycyl lysine isopeptide (Lys-Gly) (interchain with G-Cter in ubiquitin) linkage. Disordered regions lie at residues proline 301–valine 338 and lysine 354–aspartate 391. Positions aspartate 306–valine 338 are enriched in polar residues. The span at serine 361–serine 375 shows a compositional bias: low complexity. A phosphoserine mark is found at serine 367, serine 389, and serine 439. The segment covering leucine 443–glutamine 452 has biased composition (polar residues). The tract at residues leucine 443–aspartate 493 is disordered. The span at valine 453–arginine 463 shows a compositional bias: low complexity. Position 455 is a phosphoserine (serine 455). Polar residues predominate over residues methionine 464–glutamate 473.

The protein belongs to the protein kinase superfamily. STE Ser/Thr protein kinase family. MAP kinase kinase kinase subfamily. Can form homodimer. Binds both upstream activators and downstream substrates in multimolecular complexes. Interacts with TAB1/MAP3K7IP1, TAB2/MAP3K7IP2 and TAB3/MAP3K7IP3. Identified in the TRIKA2 complex composed of MAP3K7/TAK1, TAB1/MAP3K7IP1 and TAB2/MAP3K7IP2. Interacts with PPM1L and PPM1B/PP2CB. Interaction with PP2A and PPP6C leads to its repressed activity. Interacts with TRAF6 and TAB1/MAP3K7IP1; during IL-1 signaling. Interacts with TAOK1 and TAOK2; interaction with TAOK2 interferes with MAP3K7 interaction with IKKA, thus preventing NF-kappa-B activation. Interacts with DYNC2I2 (via WD domains). Interacts with CYLD and RBCK1. Interacts with TGFBR1; induces MAP3K7/TAK1 activation by TRAF6. Interacts with MAPK8IP1 and SMAD6. Interacts with isoform 1 of VRK2. Interacts with DAB2; the interaction is induced by TGF-beta stimulation and may mediate TGF-beta stimulated JNK activation. Interacts with TRIM5. Part of a complex containing ITCH, NDFIP1 and MAP3K7. Interacts with IFIT5; the interaction synergizes the recruitment of IKK to MAP3K7 and enhances IKK phosphorylation. Interacts with PLEKHM1 (via N- and C-terminus). Found in a complex with SH3RF1, RAC2, MAP2K7/MKK7, MAPK8IP1/JIP1, MAPK8/JNK1 and MAPK9/JNK2. Interacts with SASH1. Interacts with RIPK1. Mg(2+) is required as a cofactor. In terms of processing, association with TAB1/MAP3K7IP1 promotes autophosphorylation at Ser-192 and subsequent activation. Association with TAB2/MAP3K7IP2, itself associated with free unanchored Lys-63 polyubiquitin chain, promotes autophosphorylation and subsequent activation of MAP3K7. Dephosphorylation at Ser-192 by PPM1B/PP2CB and at Thr-187 by PP2A and PPP6C leads to inactivation. Post-translationally, 'Lys-48'-linked polyubiquitination at Lys-72 is induced by TNFalpha, and leads to proteasomal degradation. Undergoes 'Lys-48'-linked polyubiquitination catalyzed by ITCH. 'Lys-63'-linked polyubiquitination at Lys-158 by TRIM8 does not lead to proteasomal degradation but contributes to autophosphorylation and activation. Deubiquitinated by CYLD, a protease that selectively cleaves 'Lys-63'-linked ubiquitin chains. Deubiquitinated by USP19; leading to negative regulation of TNF-alpha- and IL-1beta-triggered NF-kappa-B activation.

It is found in the cytoplasm. The protein resides in the cell membrane. The catalysed reaction is L-seryl-[protein] + ATP = O-phospho-L-seryl-[protein] + ADP + H(+). It carries out the reaction L-threonyl-[protein] + ATP = O-phospho-L-threonyl-[protein] + ADP + H(+). With respect to regulation, activated by pro-inflammatory cytokines and in response to physical and chemical stresses, including osmotic stress, oxidative stress, arsenic and ultraviolet light irradiation. Activated by 'Lys-63'-linked polyubiquitination and by autophosphorylation. Association with TAB1/MAP3K7IP1 and TAB2/MAP3K7IP2 promotes activation through autophosphorylation, whereas PPM1B/PP2CB, PP2A and PPP6C dephosphorylation leads to inactivation. Ceramides are also able to activate MAP3K7/TAK1. Its function is as follows. Serine/threonine kinase which acts as an essential component of the MAP kinase signal transduction pathway. Plays an important role in the cascades of cellular responses evoked by changes in the environment. Mediates signal transduction of TRAF6, various cytokines including interleukin-1 (IL-1), transforming growth factor-beta (TGFB), TGFB-related factors like BMP2 and BMP4, toll-like receptors (TLR), tumor necrosis factor receptor CD40 and B-cell receptor (BCR). Once activated, acts as an upstream activator of the MKK/JNK signal transduction cascade and the p38 MAPK signal transduction cascade through the phosphorylation and activation of several MAP kinase kinases like MAP2K1/MEK1, MAP2K3/MKK3, MAP2K6/MKK6 and MAP2K7/MKK7. These MAP2Ks in turn activate p38 MAPKs and c-jun N-terminal kinases (JNKs); both p38 MAPK and JNK pathways control the transcription factors activator protein-1 (AP-1). Independently of MAP2Ks and p38 MAPKs, acts as a key activator of NF-kappa-B by promoting activation of the I-kappa-B-kinase (IKK) core complex. Mechanistically, recruited to polyubiquitin chains of RIPK2 and IKBKG/NEMO via TAB2/MAP3K7IP2 and TAB3/MAP3K7IP3, and catalyzes phosphorylation and activation of IKBKB/IKKB component of the IKK complex, leading to NF-kappa-B activation. In osmotic stress signaling, plays a major role in the activation of MAPK8/JNK1, but not that of NF-kappa-B. Promotes TRIM5 capsid-specific restriction activity. Phosphorylates RIPK1 at 'Ser-321' which positively regulates RIPK1 interaction with RIPK3 to promote necroptosis but negatively regulates RIPK1 kinase activity and its interaction with FADD to mediate apoptosis. Phosphorylates STING1 in response to cGAMP-activation, promoting association between STEEP1 and STING1 and STING1 translocation to COPII vesicles. The protein is Mitogen-activated protein kinase kinase kinase 7 (MAP3K7) of Pongo abelii (Sumatran orangutan).